A 93-amino-acid chain; its full sequence is Em protein H5 (93 aa).

The disordered stretch occupies residues 1–93; the sequence is MASGQQERSE…IDESKFKTKS (93 aa). 3 stretches are compositionally biased toward basic and acidic residues: residues 7–19, 32–62, and 73–93; these read ERSE…REGE, EAQE…EMGR, and GGER…KTKS.

This sequence belongs to the small hydrophilic plant seed protein family.

Functionally, it is thought to provide protection for the cytoplasm during the desiccation stage of embryo development. The sequence is that of Em protein H5 (EMH5) from Triticum aestivum (Wheat).